The chain runs to 250 residues: Ribosomal RNA small subunit methyltransferase G (250 aa).

Residues Gly-78, Leu-83, 129-130 (AE), and Arg-144 contribute to the S-adenosyl-L-methionine site. The tract at residues 224-250 (IAAPRKRGGQQRRAGHARGTSNRRRGT) is disordered. A compositionally biased stretch (basic residues) spans 227–250 (PRKRGGQQRRAGHARGTSNRRRGT).

Belongs to the methyltransferase superfamily. RNA methyltransferase RsmG family.

It is found in the cytoplasm. Its function is as follows. Specifically methylates the N7 position of guanine in position 518 of 16S rRNA. The sequence is that of Ribosomal RNA small subunit methyltransferase G from Nocardioides sp. (strain ATCC BAA-499 / JS614).